The primary structure comprises 676 residues: A-type ATP synthase subunit I (676 aa).

8 helical membrane-spanning segments follow: residues Val341 to Gly361, Ala390 to Val410, Ile449 to Gly469, Ile490 to Phe510, Leu538 to Met558, Met564 to Ser584, Ala590 to Ile610, and Ile617 to Ile637.

This sequence belongs to the V-ATPase 116 kDa subunit family. Has multiple subunits with at least A(3), B(3), C, D, E, F, H, I and proteolipid K(x).

Its subcellular location is the cell membrane. In terms of biological role, component of the A-type ATP synthase that produces ATP from ADP in the presence of a proton gradient across the membrane. The protein is A-type ATP synthase subunit I of Archaeoglobus fulgidus (strain ATCC 49558 / DSM 4304 / JCM 9628 / NBRC 100126 / VC-16).